A 248-amino-acid polypeptide reads, in one-letter code: Uridylate kinase (248 aa).

ATP is bound at residue 11-14 (KISG). Glycine 53 is a binding site for UMP. Residues glycine 54 and arginine 58 each coordinate ATP. Residues aspartate 74 and 135–142 (AGSPYLTT) each bind UMP. Threonine 162, tyrosine 169, and aspartate 172 together coordinate ATP.

Belongs to the UMP kinase family. In terms of assembly, homohexamer.

Its subcellular location is the cytoplasm. It carries out the reaction UMP + ATP = UDP + ADP. It participates in pyrimidine metabolism; CTP biosynthesis via de novo pathway; UDP from UMP (UMPK route): step 1/1. Inhibited by UTP. Catalyzes the reversible phosphorylation of UMP to UDP. This chain is Uridylate kinase, found in Chlamydia pneumoniae (Chlamydophila pneumoniae).